Consider the following 270-residue polypeptide: MNDINPAFVMPDVQSSRDTRQIPIQRVGVKGVRYPVSLKTPAGVVPSVGTFNLDVHLPAEVKGTHMSRFVALLEEERAPLELASFRVLLDKMLEKLEAEAGRIEVTFPYFISKIAPVSGVESLMDYEVTLTGEIRNGVTRVFLKALVPVTSLCPCSKKISQYGAHNQRSHITMNVELAGELPVEALVRMAEEEASCELWGLLKRPDEKFVTERAYENPKFVEDLVRDIAMRLNADERIVAYVLEAENFESIHNHSAYAVIERDKRLEPTA.

It belongs to the GTP cyclohydrolase IV family.

The catalysed reaction is GTP + H2O = 7,8-dihydroneopterin 3'-triphosphate + formate + H(+). The protein operates within cofactor biosynthesis; 7,8-dihydroneopterin triphosphate biosynthesis; 7,8-dihydroneopterin triphosphate from GTP: step 1/1. In terms of biological role, converts GTP to 7,8-dihydroneopterin triphosphate. The polypeptide is GTP cyclohydrolase FolE2 (Cupriavidus pinatubonensis (strain JMP 134 / LMG 1197) (Cupriavidus necator (strain JMP 134))).